We begin with the raw amino-acid sequence, 134 residues long: Aspartate 1-decarboxylase (134 aa).

The Schiff-base intermediate with substrate; via pyruvic acid role is filled by Ser-25. The residue at position 25 (Ser-25) is a Pyruvic acid (Ser). Thr-57 provides a ligand contact to substrate. Tyr-58 acts as the Proton donor in catalysis. 73 to 75 is a binding site for substrate; the sequence is GAA.

This sequence belongs to the PanD family. Heterooctamer of four alpha and four beta subunits. Pyruvate is required as a cofactor. Is synthesized initially as an inactive proenzyme, which is activated by self-cleavage at a specific serine bond to produce a beta-subunit with a hydroxyl group at its C-terminus and an alpha-subunit with a pyruvoyl group at its N-terminus.

It localises to the cytoplasm. It carries out the reaction L-aspartate + H(+) = beta-alanine + CO2. The protein operates within cofactor biosynthesis; (R)-pantothenate biosynthesis; beta-alanine from L-aspartate: step 1/1. Its function is as follows. Catalyzes the pyruvoyl-dependent decarboxylation of aspartate to produce beta-alanine. This Sulfurihydrogenibium sp. (strain YO3AOP1) protein is Aspartate 1-decarboxylase.